We begin with the raw amino-acid sequence, 131 residues long: Small ribosomal subunit protein uS8 (131 aa).

It belongs to the universal ribosomal protein uS8 family. As to quaternary structure, part of the 30S ribosomal subunit. Contacts proteins S5 and S12.

Its function is as follows. One of the primary rRNA binding proteins, it binds directly to 16S rRNA central domain where it helps coordinate assembly of the platform of the 30S subunit. In Acholeplasma laidlawii (strain PG-8A), this protein is Small ribosomal subunit protein uS8.